Consider the following 347-residue polypeptide: NADH-ubiquinone oxidoreductase chain 2 (347 aa).

10 consecutive transmembrane segments (helical) span residues 1–21 (MNPL…GIVM), 25–45 (HWLT…PILM), 59–79 (YFLT…INLV), 96–116 (IILT…FWVP), 122–142 (VHLP…MSVL), 148–168 (MINL…GGWG), 200–220 (MALL…LTFM), 240–260 (ITTI…LSGF), 274–294 (NSII…FFYM), and 325–345 (LLSP…MLML).

The protein belongs to the complex I subunit 2 family. As to quaternary structure, core subunit of respiratory chain NADH dehydrogenase (Complex I) which is composed of 45 different subunits. Interacts with TMEM242.

The protein localises to the mitochondrion inner membrane. The enzyme catalyses a ubiquinone + NADH + 5 H(+)(in) = a ubiquinol + NAD(+) + 4 H(+)(out). Its function is as follows. Core subunit of the mitochondrial membrane respiratory chain NADH dehydrogenase (Complex I) which catalyzes electron transfer from NADH through the respiratory chain, using ubiquinone as an electron acceptor. Essential for the catalytic activity and assembly of complex I. The sequence is that of NADH-ubiquinone oxidoreductase chain 2 from Thoopterus nigrescens (Swift fruit bat).